Here is a 320-residue protein sequence, read N- to C-terminus: Ferrochelatase (320 aa).

H194 and E275 together coordinate Fe cation.

The protein belongs to the ferrochelatase family.

The protein resides in the cytoplasm. The catalysed reaction is heme b + 2 H(+) = protoporphyrin IX + Fe(2+). The protein operates within porphyrin-containing compound metabolism; protoheme biosynthesis; protoheme from protoporphyrin-IX: step 1/1. In terms of biological role, catalyzes the ferrous insertion into protoporphyrin IX. The sequence is that of Ferrochelatase from Yersinia pestis bv. Antiqua (strain Antiqua).